The sequence spans 308 residues: Growth/differentiation factor 15 (308 aa).

The first 29 residues, methionine 1–alanine 29, serve as a signal peptide directing secretion. Positions leucine 30–arginine 194 are excised as a propeptide. A glycan (N-linked (GlcNAc...) asparagine) is linked at asparagine 70. A disordered region spans residues alanine 152–arginine 177. Polar residues predominate over residues glutamine 165 to arginine 177. 4 disulfides stabilise this stretch: cysteine 203–cysteine 210, cysteine 211–cysteine 274, cysteine 240–cysteine 305, and cysteine 244–cysteine 307.

It belongs to the TGF-beta family. In terms of assembly, homodimer; disulfide-linked. Interacts with GFRAL and RET; ligand of GFRAL, which mediates GDF15 internalization and cellular signaling through interaction with RET via the formation of a 2:2:2 ternary complex composed of GDF15, GFRAL and RET. Detected in plasma (at protein level). Highly expressed in placenta, with lower levels in prostate and colon and some expression in kidney.

It localises to the secreted. Its function is as follows. Hormone produced in response to various stresses to confer information about those stresses to the brain, and trigger an aversive response, characterized by nausea, vomiting, and/or loss of appetite. The aversive response is both required to reduce continuing exposure to those stresses at the time of exposure and to promote avoidance behavior in the future. Acts by binding to its receptor, GFRAL, activating GFRAL-expressing neurons localized in the area postrema and nucleus tractus solitarius of the brainstem. It then triggers the activation of neurons localized within the parabrachial nucleus and central amygdala, which constitutes part of the 'emergency circuit' that shapes responses to stressful conditions. The GDF15-GFRAL signal induces expression of genes involved in metabolism, such as lipid metabolism in adipose tissues. Required for avoidance behavior in response to food allergens: induced downstream of mast cell activation to promote aversion and minimize harmful effects of exposure to noxious substances. In addition to suppress appetite, also promotes weight loss by enhancing energy expenditure in muscle: acts by increasing calcium futile cycling in muscle. Contributes to the effect of metformin, an anti-diabetic drug, on appetite reduction and weight loss: produced in the kidney in response to metformin treatment, thereby activating the GDF15-GFRAL response, leading to reduced appetite and weight. The contribution of GDF15 to weight loss following metformin treatment is however limited and subject to discussion. Produced in response to anticancer drugs, such as camptothecin or cisplatin, promoting nausea, vomiting and contributing to malnutrition. Overproduced in many cancers, promoting anorexia in cancer (cachexia). Responsible for the risk of nausea and vomiting during pregnancy: high levels of GDF15 during pregnancy, mostly originating from the fetus, are associated with increased nausea and vomiting. Maternal sensitivity to nausea is probably determined by pre-pregnancy exposure to GDF15, women with naturally high level of GDF15 being less susceptible to nausea than women with low levels of GDF15 before pregnancy. Promotes metabolic adaptation in response to systemic inflammation caused by bacterial and viral infections in order to promote tissue tolerance and prevent tissue damage. Required for tissue tolerance in response to myocardial infarction by acting as an inhibitor of leukocyte integring activation, thereby protecting against cardiac rupture. Inhibits growth hormone signaling on hepatocytes. This Homo sapiens (Human) protein is Growth/differentiation factor 15.